We begin with the raw amino-acid sequence, 246 residues long: Transcription factor A, mitochondrial (246 aa).

The transit peptide at 1 to 42 (MAFLRSMWGVLSALGRSGAELCTGCGSRLRSPFSFVYLPRWF) directs the protein to the mitochondrion. The HMG box 1 DNA-binding region spans 50–118 (PKKPVSSYLR…VYKEEISRFK (69 aa)). Phosphoserine; by PKA occurs at positions 55, 56, and 61. A Phosphothreonine modification is found at T122. Positions 155–219 (PKRPRSAYNV…RYHNEMKSWE (65 aa)) form a DNA-binding region, HMG box 2. S160 carries the phosphoserine; by PKA modification. Residues S193 and S195 each carry the phosphoserine modification.

Monomer; binds DNA as a monomer. Homodimer. Component of the mitochondrial transcription initiation complex, composed at least of TFB2M, TFAM and POLRMT. In this complex TFAM recruits POLRMT to the promoter whereas TFB2M induces structural changes in POLRMT to enable promoter opening and trapping of the DNA non-template strand. Upon metabolic stress, forms a complex composed of FOXO3, SIRT3, TFAM and POLRMT. Interacts with TFB1M and TFB2M. Interacts with CLPX; this enhances DNA-binding. In terms of processing, phosphorylation by PKA within the HMG box 1 impairs DNA binding and promotes degradation by the AAA+ Lon protease.

The protein resides in the mitochondrion. Its subcellular location is the mitochondrion matrix. It is found in the mitochondrion nucleoid. In terms of biological role, binds to the mitochondrial light strand promoter and functions in mitochondrial transcription regulation. Component of the mitochondrial transcription initiation complex, composed at least of TFB2M, TFAM and POLRMT that is required for basal transcription of mitochondrial DNA. In this complex, TFAM recruits POLRMT to a specific promoter whereas TFB2M induces structural changes in POLRMT to enable promoter opening and trapping of the DNA non-template strand. Required for accurate and efficient promoter recognition by the mitochondrial RNA polymerase. Promotes transcription initiation from the HSP1 and the light strand promoter by binding immediately upstream of transcriptional start sites. Is able to unwind DNA. Bends the mitochondrial light strand promoter DNA into a U-turn shape via its HMG boxes. Required for maintenance of normal levels of mitochondrial DNA. May play a role in organizing and compacting mitochondrial DNA. This Homo sapiens (Human) protein is Transcription factor A, mitochondrial.